Consider the following 485-residue polypeptide: Solute carrier family 35 member F4 (485 aa).

Composition is skewed to polar residues over residues 32 to 42 (SQKSTTRSSVT) and 50 to 64 (CPSSHSSISRQLSPL). Disordered regions lie at residues 32-64 (SQKSTTRSSVTRCKPGPNCPSSHSSISRQLSPL) and 78-111 (QSRGSSGVCGRRVERQSRSGDDGTQTRPESSSQE). Residues 88 to 98 (RRVERQSRSGD) are compositionally biased toward basic and acidic residues. Residues 99–111 (DGTQTRPESSSQE) are compositionally biased toward polar residues. 10 consecutive transmembrane segments (helical) span residues 129–149 (IWGLLIILSVSSSWVGTTQIV), 156–176 (FYCPFFMTWFSTNWNIMFFPV), 217–234 (APFSILWTLTNYLYLLAL), 241–261 (DVSALFCCNKAFVFLLSWIVL), 265–285 (FMGVRIVAAIMAITGIVMMAY), 294–314 (IIGVAFAVGSASTSALYKVLF), 329–349 (FVSTLGFFNLIFISFTPIILY), 359–381 (FAALPWGCLCGMAGLWLAFNILV), 383–405 (VGVVLTYPILISIGTVLSVPGNA), and 414–434 (VIFNVVRLAATIIICIGFLLM). The EamA domain maps to 225 to 285 (LTNYLYLLAL…AITGIVMMAY (61 aa)).

It belongs to the SLC35F solute transporter family.

It is found in the membrane. Functionally, putative solute transporter. In Mus musculus (Mouse), this protein is Solute carrier family 35 member F4 (Slc35f4).